Here is a 654-residue protein sequence, read N- to C-terminus: Protein LYK2 (654 aa).

The first 25 residues, methionine 1 to leucine 25, serve as a signal peptide directing secretion. Residues serine 26–lysine 241 lie on the Extracellular side of the membrane. 3 disulfides stabilise this stretch: cysteine 50-cysteine 102, cysteine 57-cysteine 163, and cysteine 100-cysteine 161. N-linked (GlcNAc...) asparagine glycans are attached at residues asparagine 103, asparagine 170, asparagine 193, and asparagine 204. A LysM; degenerate repeat occupies tyrosine 177–proline 217. The disordered stretch occupies residues leucine 218–serine 238. Residues serine 227–serine 238 are compositionally biased toward basic residues. The helical transmembrane segment at leucine 242–phenylalanine 262 threads the bilayer. Over glycine 263–aspartate 654 the chain is Cytoplasmic. A Protein kinase domain is found at threonine 324–valine 619. Residues leucine 330–leucine 338 and lysine 368 contribute to the ATP site.

This sequence belongs to the protein kinase superfamily. Ser/Thr protein kinase family.

Its subcellular location is the cell membrane. May recognize microbe-derived N-acetylglucosamine (NAG)-containing ligands. This chain is Protein LYK2 (LYK2), found in Arabidopsis thaliana (Mouse-ear cress).